The chain runs to 200 residues: Small ribosomal subunit protein uS4 (200 aa).

A compositionally biased stretch (basic residues) spans 1–13 (MARYRGPKQKIAR). The disordered stretch occupies residues 1 to 44 (MARYRGPKQKIARRFKEPIFGPSKALERKPYPPGQHGQSRRRRE). Residues 92–154 (ARLDNTVFRM…SQDLEVIQTN (63 aa)) form the S4 RNA-binding domain.

It belongs to the universal ribosomal protein uS4 family. In terms of assembly, part of the 30S ribosomal subunit. Contacts protein S5. The interaction surface between S4 and S5 is involved in control of translational fidelity.

One of the primary rRNA binding proteins, it binds directly to 16S rRNA where it nucleates assembly of the body of the 30S subunit. Functionally, with S5 and S12 plays an important role in translational accuracy. This is Small ribosomal subunit protein uS4 from Salinibacter ruber (strain DSM 13855 / M31).